The sequence spans 411 residues: uncharacterized protein (411 aa).

The tract at residues 32-108 (LGGDPAPKPT…PEHPRRIPIP (77 aa)) is disordered.

This is an uncharacterized protein from Ictalurid herpesvirus 1 (strain Auburn) (IcHV-1).